Consider the following 338-residue polypeptide: Large ribosomal subunit protein uL10 (338 aa).

Residues 297 to 338 (PSAQQTQTQQSTAEEKKEEKKEEEKKGPSEEEIGSGLASLFG) are disordered. Low complexity predominate over residues 298–308 (SAQQTQTQQST). A compositionally biased stretch (basic and acidic residues) spans 309–325 (AEEKKEEKKEEEKKGPS).

This sequence belongs to the universal ribosomal protein uL10 family. Part of the 50S ribosomal subunit. Forms part of the ribosomal stalk which helps the ribosome interact with GTP-bound translation factors. Forms a heptameric L10(L12)2(L12)2(L12)2 complex, where L10 forms an elongated spine to which the L12 dimers bind in a sequential fashion.

Functionally, forms part of the ribosomal stalk, playing a central role in the interaction of the ribosome with GTP-bound translation factors. This is Large ribosomal subunit protein uL10 from Saccharolobus islandicus (strain Y.N.15.51 / Yellowstone #2) (Sulfolobus islandicus).